Consider the following 29-residue polypeptide: U1-pseudomyrmecitoxin-Pt1 subunit SS1 (29 aa).

Belongs to the myrmexin family. In terms of assembly, heterodimer composed of subunit SS1 and subunit LS1 (U1-PSDTX-Pt1b), and heterodimer composed of subunit SS1 and LS2 (U1-PSDTX-Pt1a); disulfide-linked. Expressed by the venom gland.

The protein localises to the secreted. This heterodimer may have anti-inflammatory properties, since the myrmexin complex (composed of 6 SS-LS heterodimers) inhibits carrageenin-induced edema in a dose-dependent manner (after subcutaneous injection into rats). The protein is U1-pseudomyrmecitoxin-Pt1 subunit SS1 of Pseudomyrmex triplarinus (Ant).